The sequence spans 94 residues: Protein translocase subunit SecE (94 aa).

Positions 1 to 32 (MTDAVGSIDMPDAQDEAPDSKKSRKGGKRGKK) are disordered. The segment covering 22–32 (KSRKGGKRGKK) has biased composition (basic residues). The chain crosses the membrane as a helical span at residues 65-85 (TVVIIFVVIMIGLVTLIDYGF).

The protein belongs to the SecE/SEC61-gamma family. In terms of assembly, component of the Sec protein translocase complex. Heterotrimer consisting of SecY, SecE and SecG subunits. The heterotrimers can form oligomers, although 1 heterotrimer is thought to be able to translocate proteins. Interacts with the ribosome. Interacts with SecDF, and other proteins may be involved. Interacts with SecA.

The protein localises to the cell membrane. Its function is as follows. Essential subunit of the Sec protein translocation channel SecYEG. Clamps together the 2 halves of SecY. May contact the channel plug during translocation. This is Protein translocase subunit SecE from Streptomyces coelicolor (strain ATCC BAA-471 / A3(2) / M145).